The sequence spans 287 residues: MAGAKEIRSKIASVQNTQKITKAMEMVAASKMRKSQDRMAASRPYAETMRKVIGHLANGNLEYKHPYLEERDVKRVGYLVVSTDRGLCGGLNINLFKKLLADMKAWSDKGVQCELAMIGSKGVSFFNSVGGNVVAQVTGMGDNPSLSELIGPVKVMLQAYDEGRLDKLYIVSNKFINTMSQVPTITQLLPLPASEDDDLKRKAWDYLYEPDPKALLDTLLRRYVESQVYQGVVENLASEQAARMVAMKAATDNGGSLIKELQLVYNKARQASITQELTEIVSGAAAV.

This sequence belongs to the ATPase gamma chain family. In terms of assembly, F-type ATPases have 2 components, CF(1) - the catalytic core - and CF(0) - the membrane proton channel. CF(1) has five subunits: alpha(3), beta(3), gamma(1), delta(1), epsilon(1). CF(0) has three main subunits: a, b and c.

It localises to the cell inner membrane. In terms of biological role, produces ATP from ADP in the presence of a proton gradient across the membrane. The gamma chain is believed to be important in regulating ATPase activity and the flow of protons through the CF(0) complex. This is ATP synthase gamma chain from Salmonella agona (strain SL483).